The chain runs to 339 residues: Glycerol-3-phosphate dehydrogenase [NAD(P)+] (339 aa).

NADPH contacts are provided by Ser15, Tyr16, His36, and Lys110. Sn-glycerol 3-phosphate is bound by residues Lys110, Gly139, and Thr141. Residue Ala143 participates in NADPH binding. Sn-glycerol 3-phosphate-binding residues include Lys195, Asp248, Ser258, Arg259, and Asn260. The active-site Proton acceptor is Lys195. Arg259 contributes to the NADPH binding site. NADPH-binding residues include Val283 and Glu285.

It belongs to the NAD-dependent glycerol-3-phosphate dehydrogenase family.

The protein resides in the cytoplasm. The enzyme catalyses sn-glycerol 3-phosphate + NAD(+) = dihydroxyacetone phosphate + NADH + H(+). It catalyses the reaction sn-glycerol 3-phosphate + NADP(+) = dihydroxyacetone phosphate + NADPH + H(+). The protein operates within membrane lipid metabolism; glycerophospholipid metabolism. Its function is as follows. Catalyzes the reduction of the glycolytic intermediate dihydroxyacetone phosphate (DHAP) to sn-glycerol 3-phosphate (G3P), the key precursor for phospholipid synthesis. This Salmonella agona (strain SL483) protein is Glycerol-3-phosphate dehydrogenase [NAD(P)+].